A 212-amino-acid chain; its full sequence is Pyridoxine/pyridoxamine 5'-phosphate oxidase (212 aa).

Substrate contacts are provided by residues arginine 8 to tyrosine 11 and lysine 66. FMN contacts are provided by residues arginine 61–lysine 66, phenylalanine 76–threonine 77, arginine 82, lysine 83, and glutamine 105. Tyrosine 123, arginine 127, and serine 131 together coordinate substrate. Residues glutamine 140–serine 141 and tryptophan 185 contribute to the FMN site. Arginine 191–histidine 193 is a binding site for substrate. Arginine 195 provides a ligand contact to FMN.

This sequence belongs to the pyridoxamine 5'-phosphate oxidase family. Homodimer. The cofactor is FMN.

The catalysed reaction is pyridoxamine 5'-phosphate + O2 + H2O = pyridoxal 5'-phosphate + H2O2 + NH4(+). The enzyme catalyses pyridoxine 5'-phosphate + O2 = pyridoxal 5'-phosphate + H2O2. It participates in cofactor metabolism; pyridoxal 5'-phosphate salvage; pyridoxal 5'-phosphate from pyridoxamine 5'-phosphate: step 1/1. It functions in the pathway cofactor metabolism; pyridoxal 5'-phosphate salvage; pyridoxal 5'-phosphate from pyridoxine 5'-phosphate: step 1/1. Functionally, catalyzes the oxidation of either pyridoxine 5'-phosphate (PNP) or pyridoxamine 5'-phosphate (PMP) into pyridoxal 5'-phosphate (PLP). The protein is Pyridoxine/pyridoxamine 5'-phosphate oxidase of Shewanella oneidensis (strain ATCC 700550 / JCM 31522 / CIP 106686 / LMG 19005 / NCIMB 14063 / MR-1).